Consider the following 109-residue polypeptide: Large ribosomal subunit protein uL22 (109 aa).

Belongs to the universal ribosomal protein uL22 family. In terms of assembly, part of the 50S ribosomal subunit.

Functionally, this protein binds specifically to 23S rRNA; its binding is stimulated by other ribosomal proteins, e.g. L4, L17, and L20. It is important during the early stages of 50S assembly. It makes multiple contacts with different domains of the 23S rRNA in the assembled 50S subunit and ribosome. Its function is as follows. The globular domain of the protein is located near the polypeptide exit tunnel on the outside of the subunit, while an extended beta-hairpin is found that lines the wall of the exit tunnel in the center of the 70S ribosome. This Methylobacillus flagellatus (strain ATCC 51484 / DSM 6875 / VKM B-1610 / KT) protein is Large ribosomal subunit protein uL22.